The following is a 145-amino-acid chain: Basic phospholipase A2 cPm08 (145 aa).

Positions 1 to 21 are cleaved as a signal peptide; it reads MYPAHLLVLLAVCVSLLGASA. A propeptide spanning residues 22 to 27 is cleaved from the precursor; that stretch reads IPPLPL. Disulfide bonds link cysteine 38–cysteine 98, cysteine 54–cysteine 144, cysteine 56–cysteine 72, cysteine 71–cysteine 125, cysteine 78–cysteine 118, cysteine 87–cysteine 111, and cysteine 105–cysteine 116. Ca(2+) contacts are provided by tyrosine 55, glycine 57, and glycine 59. Histidine 75 is a catalytic residue. Residue aspartate 76 coordinates Ca(2+). The active site involves aspartate 119.

This sequence belongs to the phospholipase A2 family. Group I subfamily. D49 sub-subfamily. Ca(2+) is required as a cofactor. Expressed by the venom gland.

The protein resides in the secreted. The catalysed reaction is a 1,2-diacyl-sn-glycero-3-phosphocholine + H2O = a 1-acyl-sn-glycero-3-phosphocholine + a fatty acid + H(+). In terms of biological role, PLA2 catalyzes the calcium-dependent hydrolysis of the 2-acyl groups in 3-sn-phosphoglycerides. This is Basic phospholipase A2 cPm08 from Laticauda semifasciata (Black-banded sea krait).